A 376-amino-acid chain; its full sequence is Sterol 24-C-methyltransferase (376 aa).

Belongs to the class I-like SAM-binding methyltransferase superfamily. Erg6/SMT family.

It catalyses the reaction zymosterol + S-adenosyl-L-methionine = fecosterol + S-adenosyl-L-homocysteine + H(+). It participates in steroid metabolism; ergosterol biosynthesis; ergosterol from zymosterol: step 1/5. Its activity is regulated as follows. Substrate analogs 25-azalanosterol and 24(R,S),25-epiminolanosterol act as inhibitors. In terms of biological role, sterol 24-C-methyltransferase; part of the third module of ergosterol biosynthesis pathway that includes the late steps of the pathway. ERG6 catalyzes the methyl transfer from S-adenosyl-methionine to the C-24 of zymosterol to form fecosterol. The third module or late pathway involves the ergosterol synthesis itself through consecutive reactions that mainly occur in the endoplasmic reticulum (ER) membrane. Firstly, the squalene synthase ERG9 catalyzes the condensation of 2 farnesyl pyrophosphate moieties to form squalene, which is the precursor of all steroids. Squalene synthase is crucial for balancing the incorporation of farnesyl diphosphate (FPP) into sterol and nonsterol isoprene synthesis. Secondly, the squalene epoxidase ERG1 catalyzes the stereospecific oxidation of squalene to (S)-2,3-epoxysqualene, which is considered to be a rate-limiting enzyme in steroid biosynthesis. Then, the lanosterol synthase ERG7 catalyzes the cyclization of (S)-2,3 oxidosqualene to lanosterol, a reaction that forms the sterol core. In the next steps, lanosterol is transformed to zymosterol through a complex process involving various demethylation, reduction and desaturation reactions. The lanosterol 14-alpha-demethylase ERG11 (also known as CYP51) catalyzes C14-demethylation of lanosterol to produce 4,4'-dimethyl cholesta-8,14,24-triene-3-beta-ol, which is critical for ergosterol biosynthesis. The C-14 reductase ERG24 reduces the C14=C15 double bond of 4,4-dimethyl-cholesta-8,14,24-trienol to produce 4,4-dimethyl-cholesta-8,24-dienol. 4,4-dimethyl-cholesta-8,24-dienol is substrate of the C-4 demethylation complex ERG25-ERG26-ERG27 in which ERG25 catalyzes the three-step monooxygenation required for the demethylation of 4,4-dimethyl and 4alpha-methylsterols, ERG26 catalyzes the oxidative decarboxylation that results in a reduction of the 3-beta-hydroxy group at the C-3 carbon to an oxo group, and ERG27 is responsible for the reduction of the keto group on the C-3. ERG28 has a role as a scaffold to help anchor ERG25, ERG26 and ERG27 to the endoplasmic reticulum and ERG29 regulates the activity of the iron-containing C4-methylsterol oxidase ERG25. Then, the sterol 24-C-methyltransferase ERG6 catalyzes the methyl transfer from S-adenosyl-methionine to the C-24 of zymosterol to form fecosterol. The C-8 sterol isomerase ERG2 catalyzes the reaction which results in unsaturation at C-7 in the B ring of sterols and thus converts fecosterol to episterol. The sterol-C5-desaturase ERG3 then catalyzes the introduction of a C-5 double bond in the B ring to produce 5-dehydroepisterol. The C-22 sterol desaturase ERG5 further converts 5-dehydroepisterol into ergosta-5,7,22,24(28)-tetraen-3beta-ol by forming the C-22(23) double bond in the sterol side chain. Finally, ergosta-5,7,22,24(28)-tetraen-3beta-ol is substrate of the C-24(28) sterol reductase ERG4 to produce ergosterol. The protein is Sterol 24-C-methyltransferase of Candida albicans (strain SC5314 / ATCC MYA-2876) (Yeast).